Reading from the N-terminus, the 340-residue chain is DNA-directed RNA polymerase subunit alpha (340 aa).

Positions 1–226 (MLIAQRPSLT…ELFGLARELN (226 aa)) are alpha N-terminal domain (alpha-NTD). An alpha C-terminal domain (alpha-CTD) region spans residues 243–340 (LAADLALPIE…DAGFVETEQY (98 aa)).

It belongs to the RNA polymerase alpha chain family. In terms of assembly, homodimer. The RNAP catalytic core consists of 2 alpha, 1 beta, 1 beta' and 1 omega subunit. When a sigma factor is associated with the core the holoenzyme is formed, which can initiate transcription.

It catalyses the reaction RNA(n) + a ribonucleoside 5'-triphosphate = RNA(n+1) + diphosphate. DNA-dependent RNA polymerase catalyzes the transcription of DNA into RNA using the four ribonucleoside triphosphates as substrates. This is DNA-directed RNA polymerase subunit alpha from Streptomyces avermitilis (strain ATCC 31267 / DSM 46492 / JCM 5070 / NBRC 14893 / NCIMB 12804 / NRRL 8165 / MA-4680).